Reading from the N-terminus, the 123-residue chain is Large ribosomal subunit protein uL14 (123 aa).

Belongs to the universal ribosomal protein uL14 family. As to quaternary structure, part of the 50S ribosomal subunit. Forms a cluster with proteins L3 and L19. In the 70S ribosome, L14 and L19 interact and together make contacts with the 16S rRNA in bridges B5 and B8.

In terms of biological role, binds to 23S rRNA. Forms part of two intersubunit bridges in the 70S ribosome. In Vibrio parahaemolyticus serotype O3:K6 (strain RIMD 2210633), this protein is Large ribosomal subunit protein uL14.